Consider the following 670-residue polypeptide: DNA ligase (670 aa).

NAD(+)-binding positions include 33-37 (DVEYD), 82-83 (SL), and glutamate 114. Lysine 116 serves as the catalytic N6-AMP-lysine intermediate. Residues arginine 137, glutamate 174, lysine 291, and lysine 315 each coordinate NAD(+). Zn(2+) contacts are provided by cysteine 409, cysteine 412, cysteine 427, and cysteine 433. Residues 593-670 (DQELPLEGKV…TEEDLIALIS (78 aa)) form the BRCT domain.

Belongs to the NAD-dependent DNA ligase family. LigA subfamily. The cofactor is Mg(2+). Mn(2+) is required as a cofactor.

It carries out the reaction NAD(+) + (deoxyribonucleotide)n-3'-hydroxyl + 5'-phospho-(deoxyribonucleotide)m = (deoxyribonucleotide)n+m + AMP + beta-nicotinamide D-nucleotide.. In terms of biological role, DNA ligase that catalyzes the formation of phosphodiester linkages between 5'-phosphoryl and 3'-hydroxyl groups in double-stranded DNA using NAD as a coenzyme and as the energy source for the reaction. It is essential for DNA replication and repair of damaged DNA. This chain is DNA ligase, found in Vibrio atlanticus (strain LGP32) (Vibrio splendidus (strain Mel32)).